Here is a 274-residue protein sequence, read N- to C-terminus: GATA transcription factor 1 (274 aa).

Disordered regions lie at residues 1–39 (MEME…KTGL) and 102–132 (SPVS…TAVA). Positions 152-159 (KARSKRRR) match the Nuclear localization signal motif. The GATA-type zinc finger occupies 190–244 (LIMGRKCQHCGAEKTPQWRAGPAGPKTLCNACGVRYKSGRLVPEYRPANSPTFTA).

The protein belongs to the type IV zinc-finger family. Class A subfamily. In terms of tissue distribution, mostly expressed in roots. Also expressed in stems, flowers and leaves.

Its subcellular location is the nucleus. In terms of biological role, transcriptional activator that specifically binds 5'-GATA-3' or 5'-GAT-3' motifs within gene promoters. May be involved in the regulation of some light-responsive genes. In Arabidopsis thaliana (Mouse-ear cress), this protein is GATA transcription factor 1 (GATA1).